Reading from the N-terminus, the 439-residue chain is MDPLSELQDDLTLDDTSEALNQLKLASIDEKNWPSDEMPDFPKSDDSKSSSPELVTHLKWDDPYYDIARHQIVEVAGDDKYGRKIIVFSACRMPPSHQLDHSKLLGYLKHTLDQYVESDYTLLYLHHGLTSDNKPSLSWLRDAYREFDRKYKKNIKALYIVHPTMFIKTLLILFKPLISFKFGQKIFYVNYLSELSEHVKLEQLGIPRQVLKYDDFLKSTQKSPATAPKPMPPRPPLPNQQFGVSLQHLQEKNPEQEPIPIVLRETVAYLQAHALTTEGIFRRSANTQVVREVQQKYNMGLPVDFDQYNELHLPAVILKTFLRELPEPLLTFDLYPHVVGFLNIDESQRVPATLQVLQTLPEENYQVLRFLTAFLVQISAHSDQNKMTNTNLAVVFGPNLLWAKDAAITLKAINPINTFTKFLLDHQGELFPSPDPSGL.

At Met-1 the chain carries N-acetylmethionine. The span at 28–48 (IDEKNWPSDEMPDFPKSDDSK) shows a compositional bias: basic and acidic residues. Residues 28–52 (IDEKNWPSDEMPDFPKSDDSKSSSP) are disordered. Ser-44, Ser-47, Ser-50, and Ser-51 each carry phosphoserine. The 156-residue stretch at 63-218 (PYYDIARHQI…QVLKYDDFLK (156 aa)) folds into the CRAL-TRIO domain. Tyr-65 carries the phosphotyrosine modification. The residue at position 80 (Lys-80) is an N6-acetyllysine. An SH3-binding motif is present at residues 228 to 238 (PKPMPPRPPLP). One can recognise a Rho-GAP domain in the interval 244–431 (VSLQHLQEKN…FLLDHQGELF (188 aa)).

In terms of assembly, found in a complex with XPO7, EIF4A1, ARHGAP1, VPS26A, VPS29, VPS35 and SFN. Interacts with BNIPL. In terms of tissue distribution, ubiquitous.

It is found in the cytoplasm. GTPase activator for the Rho, Rac and Cdc42 proteins, converting them to the putatively inactive GDP-bound state. Cdc42 seems to be the preferred substrate. This chain is Rho GTPase-activating protein 1 (ARHGAP1), found in Homo sapiens (Human).